We begin with the raw amino-acid sequence, 182 residues long: ATP synthase subunit b, chloroplastic (182 aa).

The helical transmembrane segment at 33–55 threads the bilayer; the sequence is VLNIMLLLFGLIYVLKQFLGSLL.

This sequence belongs to the ATPase B chain family. F-type ATPases have 2 components, F(1) - the catalytic core - and F(0) - the membrane proton channel. F(1) has five subunits: alpha(3), beta(3), gamma(1), delta(1), epsilon(1). F(0) has four main subunits: a(1), b(1), b'(1) and c(10-14). The alpha and beta chains form an alternating ring which encloses part of the gamma chain. F(1) is attached to F(0) by a central stalk formed by the gamma and epsilon chains, while a peripheral stalk is formed by the delta, b and b' chains.

The protein localises to the plastid. The protein resides in the chloroplast thylakoid membrane. Functionally, f(1)F(0) ATP synthase produces ATP from ADP in the presence of a proton or sodium gradient. F-type ATPases consist of two structural domains, F(1) containing the extramembraneous catalytic core and F(0) containing the membrane proton channel, linked together by a central stalk and a peripheral stalk. During catalysis, ATP synthesis in the catalytic domain of F(1) is coupled via a rotary mechanism of the central stalk subunits to proton translocation. In terms of biological role, component of the F(0) channel, it forms part of the peripheral stalk, linking F(1) to F(0). The protein is ATP synthase subunit b, chloroplastic of Antithamnion sp. (Red alga).